Consider the following 80-residue polypeptide: Metallothionein-like protein 2B (80 aa).

It belongs to the metallothionein superfamily. Type 15 family. Highly expressed in stems. Expressed in leaves and rachis.

Its function is as follows. Metallothioneins have a high content of cysteine residues that bind various heavy metals. This is Metallothionein-like protein 2B (MT2B) from Oryza sativa subsp. japonica (Rice).